The chain runs to 964 residues: Probable outer membrane protein PmpE (964 aa).

An N-terminal signal peptide occupies residues 1-18 (MKKAFFFFLIGNSLSGLA). In terms of domain architecture, Autotransporter spans 683-964 (LTPSGHPFWG…YLNGEIALRF (282 aa)).

This sequence belongs to the PMP outer membrane protein family.

Its subcellular location is the secreted. The protein localises to the cell wall. The protein resides in the cell outer membrane. In Chlamydia trachomatis serovar D (strain ATCC VR-885 / DSM 19411 / UW-3/Cx), this protein is Probable outer membrane protein PmpE (pmpE).